Consider the following 1383-residue polypeptide: DNA-directed RNA polymerase subunit beta (1383 aa).

Belongs to the RNA polymerase beta chain family. In terms of assembly, the RNAP catalytic core consists of 2 alpha, 1 beta, 1 beta' and 1 omega subunit. When a sigma factor is associated with the core the holoenzyme is formed, which can initiate transcription.

It catalyses the reaction RNA(n) + a ribonucleoside 5'-triphosphate = RNA(n+1) + diphosphate. DNA-dependent RNA polymerase catalyzes the transcription of DNA into RNA using the four ribonucleoside triphosphates as substrates. This is DNA-directed RNA polymerase subunit beta from Xanthomonas axonopodis pv. citri (strain 306).